The chain runs to 209 residues: Probable phosphatidylglycerophosphate synthase (209 aa).

4 helical membrane-spanning segments follow: residues 32-52, 105-125, 147-167, and 171-191; these read ILTL…FYGG, ALIG…LILT, WGGK…VLPL, and LHVA…ITGV.

Belongs to the CDP-alcohol phosphatidyltransferase class-I family.

It is found in the cell membrane. The catalysed reaction is a CDP-1,2-diacyl-sn-glycerol + sn-glycerol 3-phosphate = a 1,2-diacyl-sn-glycero-3-phospho-(1'-sn-glycero-3'-phosphate) + CMP + H(+). The protein operates within lipid metabolism; phospholipid metabolism. Probably catalyzes the synthesis of phosphatidylglycerophosphate by transferring a phosphatidyl group from CDP-diacylglycerol to glycerol 3-phosphate. In Mycobacterium tuberculosis (strain CDC 1551 / Oshkosh), this protein is Probable phosphatidylglycerophosphate synthase.